The chain runs to 57 residues: DNA gyrase inhibitor YacG (57 aa).

Residues cysteine 5, cysteine 8, cysteine 20, and cysteine 24 each coordinate Zn(2+).

Belongs to the DNA gyrase inhibitor YacG family. As to quaternary structure, interacts with GyrB. Requires Zn(2+) as cofactor.

Functionally, inhibits all the catalytic activities of DNA gyrase by preventing its interaction with DNA. Acts by binding directly to the C-terminal domain of GyrB, which probably disrupts DNA binding by the gyrase. The polypeptide is DNA gyrase inhibitor YacG (Caulobacter vibrioides (strain ATCC 19089 / CIP 103742 / CB 15) (Caulobacter crescentus)).